The sequence spans 621 residues: SH2B adapter protein 2 (621 aa).

Residue Y47 is modified to Phosphotyrosine. Position 130 is a phosphoserine (S130). The segment at 144 to 165 is disordered; the sequence is RASPEPEGGATPKTTEPVSEPR. In terms of domain architecture, PH spans 186–299; sequence DIQREGALRF…WVADIQGCVD (114 aa). At S303 the chain carries Phosphoserine. The region spanning 409–507 is the SH2 domain; the sequence is WFHGTLSRVK…SADITLRSYV (99 aa). Disordered regions lie at residues 507-528 and 548-609; these read VRAQGPPPDPGPAPNTAAPVPA and PPTS…ATLG. The segment covering 552-570 has biased composition (low complexity); the sequence is PSNGAGASSSSGSSSSATS. Residue S597 is modified to Phosphoserine. Position 618 is a phosphotyrosine (Y618).

This sequence belongs to the SH2B adapter family. In terms of assembly, homodimer. Interacts with KIT/c-KIT, SHC1, EPOR, PDGFR, VAV1 and VAV3. Interacts (via N-terminal region) with SHC1. Interacts (via the phosphorylated C-terminus) with GRB2. Interacts (via its SH2 domain) with EPOR, INSR and KIT. Interacts with GRB2 after B-cell antigen receptor stimulation. Interacts (via PH domain) with VAV3. Interacts with NTRK1, NTRK2 and NTRK3 (phosphorylated); after stimulation of the receptor by its extracellular ligand and subsequent autophosphorylation of the receptor. Binds INSR, GRB2, ASB6 and CAP. Insulin stimulation leads to dissociation of CAP. Binds CBS only when SH2B2/APS has become phosphorylated. INSR binding does not depend on the phosphorylation of SH2B2/APS. Phosphorylated on a tyrosine residue by NTRK1, NTRK2, NTRK3 and INSR after stimulation of the receptor by its extracellular ligand. Tyrosine phosphorylated by JAK2, KIT and other kinases activated by B-cell receptor in response to stimulation with cytokines, IL3, IL5, PDGF, IGF1, IGF2, CSF2/GM-CSF and cross-linking of the B-cell receptor complex. Detected in embryonic brain, spinal cord and cortical neurons.

The protein resides in the cytoplasm. The protein localises to the membrane. Its function is as follows. Adapter protein for several members of the tyrosine kinase receptor family. Involved in multiple signaling pathways. Binds to EPOR and suppresses EPO-induced STAT5 activation, possibly through a masking effect on STAT5 docking sites in EPOR. Suppresses PDGF-induced mitogenesis. Involved in stimulation of glucose uptake by insulin. Involved in coupling from immunoreceptor to Ras signaling. Acts as a negative regulator of cytokine signaling in collaboration with CBL. Induces cytoskeletal reorganization and neurite outgrowth in cultured neurons. This Rattus norvegicus (Rat) protein is SH2B adapter protein 2 (Sh2b2).